Reading from the N-terminus, the 383-residue chain is Probable cytosolic iron-sulfur protein assembly protein 1 (383 aa).

WD repeat units follow at residues 10 to 49 (AHNDKVWSVSVHPTLPIIATASTDKSTKLYKLSARQKFPL), 56 to 108 (THKR…VEYD), 135 to 175 (GHEN…EEFE), 182 to 221 (DHSQDVKNVSWHPSMNILASSSYDDTIRIYQQDIAGDEWS), 228 to 275 (GHEG…EDDE), 302 to 341 (VHKYPVYSVAWSALTGKIASAGSDGKIVVYSETEKGKWVI), and 349 to 383 (HGVHEINCVIWAQLDDENEILVSAGDDGYVNLWKI).

This sequence belongs to the WD repeat CIA1 family. Interacts with NAR1.

The protein localises to the cytoplasm. It is found in the nucleus. Functionally, essential component of the cytosolic iron-sulfur (Fe/S) protein assembly machinery. Required for the maturation of extramitochondrial Fe/S proteins. The sequence is that of Probable cytosolic iron-sulfur protein assembly protein 1 from Candida albicans (strain SC5314 / ATCC MYA-2876) (Yeast).